A 303-amino-acid chain; its full sequence is Quinolinate synthase (303 aa).

The iminosuccinate site is built by histidine 23 and serine 40. Residue cysteine 85 participates in [4Fe-4S] cluster binding. Residues 111–113 (YIN) and serine 128 contribute to the iminosuccinate site. Position 171 (cysteine 171) interacts with [4Fe-4S] cluster. Iminosuccinate is bound by residues 197-199 (HPE) and threonine 214. Cysteine 259 lines the [4Fe-4S] cluster pocket.

This sequence belongs to the quinolinate synthase family. Type 2 subfamily. Requires [4Fe-4S] cluster as cofactor.

Its subcellular location is the cytoplasm. The enzyme catalyses iminosuccinate + dihydroxyacetone phosphate = quinolinate + phosphate + 2 H2O + H(+). Its pathway is cofactor biosynthesis; NAD(+) biosynthesis; quinolinate from iminoaspartate: step 1/1. In terms of biological role, catalyzes the condensation of iminoaspartate with dihydroxyacetone phosphate to form quinolinate. The chain is Quinolinate synthase from Clostridium acetobutylicum (strain ATCC 824 / DSM 792 / JCM 1419 / IAM 19013 / LMG 5710 / NBRC 13948 / NRRL B-527 / VKM B-1787 / 2291 / W).